The following is a 256-amino-acid chain: Uridylate kinase (256 aa).

10 to 13 (KLSG) is an ATP binding site. Glycine 52 contacts UMP. ATP-binding residues include glycine 53 and arginine 57. UMP is bound by residues aspartate 72 and 134-141 (NGQPFLTT). Residues tyrosine 168 and aspartate 171 each coordinate ATP.

It belongs to the UMP kinase family. As to quaternary structure, homohexamer.

It is found in the cytoplasm. The catalysed reaction is UMP + ATP = UDP + ADP. It functions in the pathway pyrimidine metabolism; CTP biosynthesis via de novo pathway; UDP from UMP (UMPK route): step 1/1. With respect to regulation, inhibited by UTP. In terms of biological role, catalyzes the reversible phosphorylation of UMP to UDP. The sequence is that of Uridylate kinase from Frankia alni (strain DSM 45986 / CECT 9034 / ACN14a).